We begin with the raw amino-acid sequence, 961 residues long: SH3 domain-binding protein 4 (961 aa).

In terms of domain architecture, SH3 1 spans 55–114 (GNAKEVIAIKDYCPNNFTTLKFSKGDHLYVLDTSGGEWWYAHNTTEMGYIPSSYVQPLNY). Ser-131, Ser-244, Ser-249, Ser-277, and Ser-294 each carry phosphoserine. A ZU5 domain is found at 315-452 (TNIVCKLDSS…LEPCMYLAIV (138 aa)). A Phosphoserine modification is found at Ser-635. In terms of domain architecture, SH3 2 spans 652–722 (SSLKFGKLLK…HTKNVLVVGK (71 aa)).

As to quaternary structure, homodimer or homooligomer. Interacts with DNM2, EPS15, clathrin, the adapter protein complex 2/AP-2 and TFRC. Interacts with the Rag GTPases RRAGA, RRAGB, RRAGC and RRAGD; the interaction is most probably direct, preferentially occurs with their inactive GDP-bound form and is negatively regulated by amino acids. In terms of processing, phosphorylated upon EGF stimulation. Phosphorylation prevents interaction with DNM2.

The protein resides in the membrane. It localises to the clathrin-coated pit. Its subcellular location is the cytoplasmic vesicle. It is found in the clathrin-coated vesicle. The protein localises to the nucleus. May function in transferrin receptor internalization at the plasma membrane through a cargo-specific control of clathrin-mediated endocytosis. Alternatively, may act as a negative regulator of the amino acid-induced TOR signaling by inhibiting the formation of active Rag GTPase complexes. Preferentially binds inactive Rag GTPase complexes and prevents their interaction with the mTORC1 complex inhibiting its relocalization to lysosomes and its activation. Thereby, may indirectly regulate cell growth, proliferation and autophagy. This Rattus norvegicus (Rat) protein is SH3 domain-binding protein 4 (Sh3bp4).